The chain runs to 518 residues: Glutamate--cysteine ligase (518 aa).

The protein belongs to the glutamate--cysteine ligase type 1 family. Type 1 subfamily.

It carries out the reaction L-cysteine + L-glutamate + ATP = gamma-L-glutamyl-L-cysteine + ADP + phosphate + H(+). The protein operates within sulfur metabolism; glutathione biosynthesis; glutathione from L-cysteine and L-glutamate: step 1/2. The sequence is that of Glutamate--cysteine ligase from Salmonella agona (strain SL483).